Reading from the N-terminus, the 321-residue chain is Sialic acid-binding periplasmic protein SiaP (321 aa).

Residues Met-1–Ala-22 form the signal peptide.

Belongs to the bacterial solute-binding protein 7 family. In terms of assembly, the complex comprises the extracytoplasmic solute receptor protein SiaP, and the two transmembrane proteins SiaQ and SiaM.

The protein localises to the periplasm. In terms of biological role, part of the tripartite ATP-independent periplasmic (TRAP) transport system SiaPQM that catalyzes unidirectional Na(+)-dependent sialic acid uptake. Binds the common sialic acid N-acetylneuraminic acid (Neu5Ac) with a high affinity. The chain is Sialic acid-binding periplasmic protein SiaP from Vibrio cholerae serotype O1 (strain ATCC 39315 / El Tor Inaba N16961).